A 263-amino-acid polypeptide reads, in one-letter code: Type III pantothenate kinase (263 aa).

14 to 21 (DIGNTSVN) contacts ATP. Substrate is bound at residue 115–118 (GADR). The active-site Proton acceptor is the D117. Position 137 (D137) interacts with K(+). T140 lines the ATP pocket. Substrate is bound at residue T192.

This sequence belongs to the type III pantothenate kinase family. As to quaternary structure, homodimer. It depends on NH4(+) as a cofactor. K(+) is required as a cofactor.

It localises to the cytoplasm. It carries out the reaction (R)-pantothenate + ATP = (R)-4'-phosphopantothenate + ADP + H(+). It functions in the pathway cofactor biosynthesis; coenzyme A biosynthesis; CoA from (R)-pantothenate: step 1/5. In terms of biological role, catalyzes the phosphorylation of pantothenate (Pan), the first step in CoA biosynthesis. The protein is Type III pantothenate kinase of Dehalococcoides mccartyi (strain ATCC BAA-2100 / JCM 16839 / KCTC 5957 / BAV1).